The primary structure comprises 303 residues: 2-dehydropantoate 2-reductase (303 aa).

Residues 7-12 (GCGALG), asparagine 98, and alanine 122 each bind NADP(+). Asparagine 98 contacts substrate. The active-site Proton donor is lysine 176. Residues asparagine 180, asparagine 184, asparagine 194, and serine 244 each coordinate substrate. Glutamate 256 provides a ligand contact to NADP(+).

This sequence belongs to the ketopantoate reductase family. Monomer.

The protein resides in the cytoplasm. The enzyme catalyses (R)-pantoate + NADP(+) = 2-dehydropantoate + NADPH + H(+). It functions in the pathway cofactor biosynthesis; (R)-pantothenate biosynthesis; (R)-pantoate from 3-methyl-2-oxobutanoate: step 2/2. Its function is as follows. Catalyzes the NADPH-dependent reduction of ketopantoate into pantoic acid. The polypeptide is 2-dehydropantoate 2-reductase (panE) (Escherichia coli O157:H7).